Consider the following 446-residue polypeptide: High mobility group B protein 13 (446 aa).

Disordered stretches follow at residues 1–43 (MSTV…TKSF) and 110–130 (LAQT…AETK). The span at 11 to 22 (AKKSRNSRKALK) shows a compositional bias: basic residues. 2 DNA-binding regions (HMG box) span residues 129 to 197 (TKRP…TKEK) and 246 to 312 (PKQP…EGYK). The span at 349 to 371 (NIIKKTKETAKNKKKNENVDPNK) shows a compositional bias: basic and acidic residues. The interval 349–377 (NIIKKTKETAKNKKKNENVDPNKPKKPTS) is disordered. The HMG box 3 DNA-binding region spans 372-440 (PKKPTSSYFL…AYKKEVEEYN (69 aa)).

This sequence belongs to the HMGB family.

It localises to the nucleus. In Arabidopsis thaliana (Mouse-ear cress), this protein is High mobility group B protein 13 (HMGB13).